Here is a 134-residue protein sequence, read N- to C-terminus: Methylglyoxal synthase (134 aa).

Positions 1 to 134 constitute an MGS-like domain; the sequence is MVNLNIALIA…GLLEWRNAVK (134 aa). Substrate-binding positions include H11, K15, and 37–40; that span reads TGAT. Residue D63 is the Proton donor/acceptor of the active site. H90 serves as a coordination point for substrate.

This sequence belongs to the methylglyoxal synthase family.

The catalysed reaction is dihydroxyacetone phosphate = methylglyoxal + phosphate. Functionally, catalyzes the formation of methylglyoxal from dihydroxyacetone phosphate. This Thermoanaerobacterium thermosaccharolyticum (Clostridium thermosaccharolyticum) protein is Methylglyoxal synthase.